Here is a 130-residue protein sequence, read N- to C-terminus: MADVRYYGTGRRKHSVARVHLVAGDGKVVVNGRDISEYFGHETLIMMAKSPLVLTETEGKYDVIVNVNGGGYTGQAGAIRHGVSRALLQADPEFRPSLKEKGFLTRDARMKERKKYGLKAARRAPQFSKR.

It belongs to the universal ribosomal protein uS9 family.

This chain is Small ribosomal subunit protein uS9, found in Exiguobacterium sp. (strain ATCC BAA-1283 / AT1b).